A 147-amino-acid chain; its full sequence is MPSSAFKINLSVSPWFFCSTWSSLICWPWTITTSVSRSTLSSTTWILWTWLFNSVSIFVSRWSFDFLYSLNSLRVTYSVFTGITGLLSLNCLLKLPENSTLLLSLSIIYQPEKVPFWSFSPCHEILFRYKTEFSLSLSHTSFLFSEI.

It to M.pneumoniae MPN_465.

This is an uncharacterized protein from Mycoplasma pneumoniae (strain ATCC 29342 / M129 / Subtype 1) (Mycoplasmoides pneumoniae).